Reading from the N-terminus, the 174-residue chain is uncharacterized protein (174 aa).

This is an uncharacterized protein from Dictyostelium discoideum (Social amoeba).